A 248-amino-acid chain; its full sequence is MKSSTQAVLEHTAIPKHIAVIMDGNGRWAKKRFLPRIMGHKRGLDALENMVKHCAKLGVQYLTVFAFSTENWRRPEDEVSFLMGLFLQALQKQVRRLHENNMRLKILGSRERFNRQILKGIEEAEALTANNTGLTLSIAADYGGRWDILQAANKLIAEGVSEITEDTLAKYLMLGDAPEPDLFIRTGGETRISNFLLWQMAYAELYFTDILWPDFDGKALDDAVASFQKRERRFGRTSEQLPIEQQRN.

The active site involves aspartate 23. Aspartate 23 serves as a coordination point for Mg(2+). Residues 24 to 27 (GNGR), tryptophan 28, arginine 36, histidine 40, and 68 to 70 (STE) contribute to the substrate site. Catalysis depends on asparagine 71, which acts as the Proton acceptor. Residues tryptophan 72, arginine 74, arginine 185, and 191-193 (RIS) each bind substrate. Glutamate 204 serves as a coordination point for Mg(2+).

The protein belongs to the UPP synthase family. In terms of assembly, homodimer. It depends on Mg(2+) as a cofactor.

Functionally, catalyzes the condensation of isopentenyl diphosphate (IPP) with allylic pyrophosphates generating different type of terpenoids. The polypeptide is Isoprenyl transferase (Neisseria meningitidis serogroup A / serotype 4A (strain DSM 15465 / Z2491)).